The chain runs to 246 residues: MDGTDMTEQPVYKRVLLKVSGEALMGSREYGLDKAMVQTIASDIADVVAFGVEVCLVIGGGNIFRGVSAAASGMDRAQGDYIGMLATVMNALAMQAALEKLNVPTRVQSAIPMASVCEPYVRRRAQRHMEKGRVVIFAAGTGNPFFTTDTAAALRAAEMGCNVLLKGTQVDGVYAADPRKNPDAERYNELTYLDVLSRDLSVMDAAAISLCRENHLPIIVFNIHETGAFGRVIRGEGRFTRIVETQ.

An ATP-binding site is contributed by 18-21 (KVSG). A UMP-binding site is contributed by Gly60. ATP contacts are provided by Gly61 and Arg65. UMP contacts are provided by residues Asp80 and 141–148 (TGNPFFTT). Positions 168, 169, 174, and 177 each coordinate ATP.

Belongs to the UMP kinase family. As to quaternary structure, homohexamer.

It localises to the cytoplasm. It catalyses the reaction UMP + ATP = UDP + ADP. It participates in pyrimidine metabolism; CTP biosynthesis via de novo pathway; UDP from UMP (UMPK route): step 1/1. With respect to regulation, inhibited by UTP. In terms of biological role, catalyzes the reversible phosphorylation of UMP to UDP. The chain is Uridylate kinase from Granulibacter bethesdensis (strain ATCC BAA-1260 / CGDNIH1).